The sequence spans 253 residues: Transcription factor bHLH106 (253 aa).

The bHLH domain maps to 66-115 (AALRNHKEAERRRRERINSHLNKLRNVLSCNSKTDKATLLAKVVQRVREL).

As to quaternary structure, homodimer.

The protein localises to the nucleus. This is Transcription factor bHLH106 (BHLH106) from Arabidopsis thaliana (Mouse-ear cress).